The sequence spans 155 residues: 2-C-methyl-D-erythritol 2,4-cyclodiphosphate synthase (155 aa).

A divalent metal cation contacts are provided by D8 and H10. 4-CDP-2-C-methyl-D-erythritol 2-phosphate is bound by residues D8–H10 and H34–S35. H42 contacts a divalent metal cation. 4-CDP-2-C-methyl-D-erythritol 2-phosphate contacts are provided by residues D56–G58, F61–D65, A100–L106, T132–E135, F139, and K142.

Belongs to the IspF family. In terms of assembly, homotrimer. A divalent metal cation serves as cofactor.

The catalysed reaction is 4-CDP-2-C-methyl-D-erythritol 2-phosphate = 2-C-methyl-D-erythritol 2,4-cyclic diphosphate + CMP. It functions in the pathway isoprenoid biosynthesis; isopentenyl diphosphate biosynthesis via DXP pathway; isopentenyl diphosphate from 1-deoxy-D-xylulose 5-phosphate: step 4/6. Functionally, involved in the biosynthesis of isopentenyl diphosphate (IPP) and dimethylallyl diphosphate (DMAPP), two major building blocks of isoprenoid compounds. Catalyzes the conversion of 4-diphosphocytidyl-2-C-methyl-D-erythritol 2-phosphate (CDP-ME2P) to 2-C-methyl-D-erythritol 2,4-cyclodiphosphate (ME-CPP) with a corresponding release of cytidine 5-monophosphate (CMP). This Clostridium botulinum (strain Okra / Type B1) protein is 2-C-methyl-D-erythritol 2,4-cyclodiphosphate synthase.